We begin with the raw amino-acid sequence, 851 residues long: Alanine--tRNA ligase (851 aa).

Zn(2+)-binding residues include histidine 535, histidine 539, cysteine 637, and histidine 641.

The protein belongs to the class-II aminoacyl-tRNA synthetase family. Zn(2+) is required as a cofactor.

The protein resides in the cytoplasm. It catalyses the reaction tRNA(Ala) + L-alanine + ATP = L-alanyl-tRNA(Ala) + AMP + diphosphate. In terms of biological role, catalyzes the attachment of alanine to tRNA(Ala) in a two-step reaction: alanine is first activated by ATP to form Ala-AMP and then transferred to the acceptor end of tRNA(Ala). Also edits incorrectly charged Ser-tRNA(Ala) and Gly-tRNA(Ala) via its editing domain. In Acholeplasma laidlawii (strain PG-8A), this protein is Alanine--tRNA ligase.